A 330-amino-acid polypeptide reads, in one-letter code: Polyprenal reductase (330 aa).

The Cytoplasmic portion of the chain corresponds to 1–16 (MAGWAGFELSALNPLR). Residues 17–37 (TLWLALAAAFLFALLLQLAPA) traverse the membrane as a helical segment. The Lumenal segment spans residues 38–80 (RLLPSCALFQDLLRYGKTKQSGSRRPAVCRAFDVPKRYFSHFY). A helical transmembrane segment spans residues 81–101 (VISVVWNGSLLWLLSQSLFLG). At 102–132 (APFPNWLSALLRTLGATQFQALEMESKASRM) the chain is on the cytoplasmic side. The chain crosses the membrane as a helical span at residues 133-153 (PAAELALSAFLVLVFLWVHSL). At 154–169 (RRLFECFYVSVFSNAA) the chain is on the lumenal side. Residues 170–190 (IHVVQYCFGLVYYVLVGLTVL) traverse the membrane as a helical segment. Topologically, residues 191-206 (SQVPMDDKNVYVLGKN) are cytoplasmic. A helical membrane pass occupies residues 207-227 (LLIQARWFHILGMVMFFWSSA). At 228 to 277 (HQYKCHVILSNLRRNKKGVVIHCQHRIPFGDWFEYVSSANYLAELMIYIS) the chain is on the lumenal side. The helical transmembrane segment at 278–298 (MAVTFGLHNLTWWLVVTYVFS) threads the bilayer. Topologically, residues 299–330 (SQALSAFFNHKFYRSTFVSYPKHRKAFLPFLF) are cytoplasmic.

The protein belongs to the steroid 5-alpha reductase family. Polyprenal reductase subfamily.

The protein resides in the endoplasmic reticulum membrane. It catalyses the reaction a di-trans,poly-cis-dolichal + NADP(+) = a di-trans,poly-cis-polyprenal + NADPH + H(+). It carries out the reaction a 3-oxo-5alpha-steroid + NADP(+) = a 3-oxo-Delta(4)-steroid + NADPH + H(+). The catalysed reaction is androst-4-ene-3,17-dione + NADPH + H(+) = 5alpha-androstan-3,17-dione + NADP(+). The enzyme catalyses 17beta-hydroxy-5alpha-androstan-3-one + NADP(+) = testosterone + NADPH + H(+). The protein operates within protein modification; protein glycosylation. In terms of biological role, plays a key role in early steps of protein N-linked glycosylation by being involved in the conversion of polyprenol into dolichol. Acts as a polyprenal reductase that mediates the reduction of polyprenal into dolichal in a NADP-dependent mechanism. Dolichols are required for the synthesis of dolichol-linked monosaccharides and the oligosaccharide precursor used for N-glycosylation. Also able to convert testosterone (T) into 5-alpha-dihydrotestosterone (DHT). In Mus musculus (Mouse), this protein is Polyprenal reductase.